Reading from the N-terminus, the 102-residue chain is Integration host factor subunit beta (102 aa).

The protein belongs to the bacterial histone-like protein family. As to quaternary structure, heterodimer of an alpha and a beta chain.

This protein is one of the two subunits of integration host factor, a specific DNA-binding protein that functions in genetic recombination as well as in transcriptional and translational control. The sequence is that of Integration host factor subunit beta from Marinomonas sp. (strain MWYL1).